Consider the following 200-residue polypeptide: Mediator of RNA polymerase II transcription subunit 22 (200 aa).

A coiled-coil region spans residues 93–122 (SVNEAIDQRNQQLRALQEECDRKLITLRDE). Residues 167-200 (SAPLLASPETGAGPLQSAAPVHSHGGGPGPTEHT) are disordered. Residues 190 to 200 (HGGGPGPTEHT) show a composition bias toward gly residues.

This sequence belongs to the Mediator complex subunit 22 family. As to quaternary structure, component of the Mediator complex, which is composed of MED1, MED4, MED6, MED7, MED8, MED9, MED10, MED11, MED12, MED13, MED13L, MED14, MED15, MED16, MED17, MED18, MED19, MED20, MED21, MED22, MED23, MED24, MED25, MED26, MED27, MED29, MED30, MED31, CCNC, CDK8 and CDC2L6/CDK11. The MED12, MED13, CCNC and CDK8 subunits form a distinct module termed the CDK8 module. Mediator containing the CDK8 module is less active than Mediator lacking this module in supporting transcriptional activation. Individual preparations of the Mediator complex lacking one or more distinct subunits have been variously termed ARC, CRSP, DRIP, PC2, SMCC and TRAP.

Its subcellular location is the nucleus. Component of the Mediator complex, a coactivator involved in the regulated transcription of nearly all RNA polymerase II-dependent genes. Mediator functions as a bridge to convey information from gene-specific regulatory proteins to the basal RNA polymerase II transcription machinery. Mediator is recruited to promoters by direct interactions with regulatory proteins and serves as a scaffold for the assembly of a functional preinitiation complex with RNA polymerase II and the general transcription factors. This Rattus norvegicus (Rat) protein is Mediator of RNA polymerase II transcription subunit 22 (Med22).